A 556-amino-acid chain; its full sequence is 2-succinyl-5-enolpyruvyl-6-hydroxy-3-cyclohexene-1-carboxylate synthase (556 aa).

Belongs to the TPP enzyme family. MenD subfamily. Homodimer. Requires Mg(2+) as cofactor. Mn(2+) is required as a cofactor. The cofactor is thiamine diphosphate.

The catalysed reaction is isochorismate + 2-oxoglutarate + H(+) = 5-enolpyruvoyl-6-hydroxy-2-succinyl-cyclohex-3-ene-1-carboxylate + CO2. It functions in the pathway quinol/quinone metabolism; 1,4-dihydroxy-2-naphthoate biosynthesis; 1,4-dihydroxy-2-naphthoate from chorismate: step 2/7. The protein operates within quinol/quinone metabolism; menaquinone biosynthesis. Catalyzes the thiamine diphosphate-dependent decarboxylation of 2-oxoglutarate and the subsequent addition of the resulting succinic semialdehyde-thiamine pyrophosphate anion to isochorismate to yield 2-succinyl-5-enolpyruvyl-6-hydroxy-3-cyclohexene-1-carboxylate (SEPHCHC). The sequence is that of 2-succinyl-5-enolpyruvyl-6-hydroxy-3-cyclohexene-1-carboxylate synthase from Enterobacter sp. (strain 638).